We begin with the raw amino-acid sequence, 789 residues long: UPF0313 protein VC_1711 (789 aa).

One can recognise a Radical SAM core domain in the interval 363–642 (AYDMIKTSVN…KALLRYHDPA (280 aa)). Positions 377, 381, and 384 each coordinate [4Fe-4S] cluster. Positions 669-789 (PEKDSDLVTP…NTQRQPQRAR (121 aa)) are disordered. Over residues 683-698 (KSGRHGANRFATKHTH) the composition is skewed to basic residues. Composition is skewed to polar residues over residues 716–726 (RPNSGNKSNQG), 733–763 (PTGSKPTANKPAGNQSARSEQNRGQQGQRGS), and 778–789 (RGNTQRQPQRAR).

This sequence belongs to the UPF0313 family. Requires [4Fe-4S] cluster as cofactor.

This Vibrio cholerae serotype O1 (strain ATCC 39315 / El Tor Inaba N16961) protein is UPF0313 protein VC_1711.